A 331-amino-acid polypeptide reads, in one-letter code: UDP-GalNAc:beta-1,3-N-acetylgalactosaminyltransferase 1 (331 aa).

Residues 1-20 (MAPAVLTALPNRMSLRSLKW) are Cytoplasmic-facing. The helical; Signal-anchor for type II membrane protein transmembrane segment at 21 to 43 (SLLLLSLLSFLVIWYLSLPHYNV) threads the bilayer. The Lumenal portion of the chain corresponds to 44-331 (IERVNWMYFY…VMLRNTTCHY (288 aa)). 5 N-linked (GlcNAc...) asparagine glycosylation sites follow: Asn72, Asn154, Asn198, Asn212, and Asn326.

The protein belongs to the glycosyltransferase 31 family. The cofactor is Mg(2+). Detected in brain, ovary, kidney, uterus and stomach. In ovary, specifically expressed in follicular granulosa cells and shows particularly strong expression at later stages of follicle development.

It is found in the golgi apparatus membrane. It carries out the reaction a globoside Gb3Cer (d18:1(4E)) + UDP-N-acetyl-alpha-D-galactosamine = a globoside Gb4Cer (d18:1(4E)) + UDP + H(+). The protein operates within protein modification; protein glycosylation. In terms of biological role, transfers N-acetylgalactosamine onto globotriaosylceramide. Plays a critical role in preimplantation stage embryonic development. In Mus musculus (Mouse), this protein is UDP-GalNAc:beta-1,3-N-acetylgalactosaminyltransferase 1.